Here is a 476-residue protein sequence, read N- to C-terminus: MNGYGSPYLYMGGPVSQPPRAPLQRTPKCARCRNHGVLSWLKGHKRYCRFKDCTCEKCILIIERQRVMAAQVALRRQQANESLESLIPDSLRALPGPPPPGDAAATAATASQSSPASQASQPPAPPRPTAELAAAAALRWVAEPQPGTLPAQLAKPDLTEERVGDSSSTDNTAEAFSDKDTDQRSSPDVVKSKNCFTPESPEIVSVDEGGYAVQKNGGNPESCPDSPKYHAEQSHLLIEGPSGTVSLPFSLKANRPPLEVLKKIFPNQKPTVLELILKGCGGDLVSAVEVLLSSRSSAAGAERTAEESLVLPSSGHIFEHTLGSYPISSSKWSVGSAFRVPDTLRFSADSSNVVPNPLAVPLQHPFPQPPRYPLMLRNTLARNQSSPFLPNDVTLWNTMTLQQQYQLRSQYVSPFPSNSTSVFRSSPVLSSRTTEDPRISIPDDGCPIVTKQSIYTEDDYDERSDSSDSRILNTSS.

Positions 29–76 form a DNA-binding region, DM; it reads CARCRNHGVLSWLKGHKRYCRFKDCTCEKCILIIERQRVMAAQVALRR. 2 disordered regions span residues 89 to 130 and 147 to 195; these read DSLR…RPTA and GTLP…SKNC. The segment covering 102–121 has biased composition (low complexity); it reads DAAATAATASQSSPASQASQ. Positions 165-174 are enriched in polar residues; sequence DSSSTDNTAE. A compositionally biased stretch (basic and acidic residues) spans 176–185; that stretch reads FSDKDTDQRS. In terms of domain architecture, DMA spans 255–290; it reads RPPLEVLKKIFPNQKPTVLELILKGCGGDLVSAVEV. The segment covering 418–432 has biased composition (polar residues); sequence NSTSVFRSSPVLSSR. The segment at 418 to 476 is disordered; it reads NSTSVFRSSPVLSSRTTEDPRISIPDDGCPIVTKQSIYTEDDYDERSDSSDSRILNTSS.

The protein belongs to the DMRT family. Expressed in the ventral spinal cord, in a restrical population of neurons migrating ventrically in the developing spinal cord at 11.5 dpc.

It is found in the nucleus. In terms of biological role, probable transcription factor that plays a role in configuring the spinal circuits controlling stride in vertebrates. Involved in neuronal specification within specific subdivision of spinal cord neurons and in the development of a coordinated locomotor network controlling limb movements. May regulate transcription during sexual development. In Mus musculus (Mouse), this protein is Doublesex- and mab-3-related transcription factor 3 (Dmrt3).